The following is a 481-amino-acid chain: Cerebral cavernous malformations 2 protein-like (481 aa).

2 disordered regions span residues 161-193 and 214-290; these read PVPA…GTAE and EARA…DPQN. Basic and acidic residues predominate over residues 184–193; that stretch reads PEKRRVGTAE. Positions 214-223 are enriched in gly residues; the sequence is EARAAGGGGS. The span at 237 to 251 shows a compositional bias: basic and acidic residues; sequence WERRQTFSGSWERRH.

The protein belongs to the CCM2 family.

The chain is Cerebral cavernous malformations 2 protein-like (Ccm2l) from Mus musculus (Mouse).